The primary structure comprises 78 residues: Beta-defensin 12 (78 aa).

The signal sequence occupies residues 1-27 (MALSRGTFYFGLALFFIVVELPSGSWA). Disulfide bonds link cysteine 46–cysteine 73, cysteine 53–cysteine 67, and cysteine 57–cysteine 74.

The protein belongs to the beta-defensin family.

Its subcellular location is the secreted. In terms of biological role, has antibacterial activity. This is Beta-defensin 12 (Defb12) from Rattus norvegicus (Rat).